We begin with the raw amino-acid sequence, 540 residues long: Glucose-6-phosphate isomerase (540 aa).

The Proton donor role is filled by E350. Residues H381 and K503 contribute to the active site.

This sequence belongs to the GPI family.

Its subcellular location is the cytoplasm. It catalyses the reaction alpha-D-glucose 6-phosphate = beta-D-fructose 6-phosphate. It functions in the pathway carbohydrate biosynthesis; gluconeogenesis. The protein operates within carbohydrate degradation; glycolysis; D-glyceraldehyde 3-phosphate and glycerone phosphate from D-glucose: step 2/4. Catalyzes the reversible isomerization of glucose-6-phosphate to fructose-6-phosphate. In Burkholderia mallei (strain NCTC 10247), this protein is Glucose-6-phosphate isomerase.